A 169-amino-acid polypeptide reads, in one-letter code: Lipoprotein signal peptidase (169 aa).

The next 2 helical transmembrane spans lie at 56-76 (FLPPGVLLILTTIIVSGVIIY) and 84-104 (QPLFLGSFGLIAGGGIGNLID). Residues Asp-113 and Asp-139 contribute to the active site. The chain crosses the membrane as a helical span at residues 132–152 (WPIFNIADSAITIGACMLIIF).

Belongs to the peptidase A8 family.

Its subcellular location is the cell inner membrane. It carries out the reaction Release of signal peptides from bacterial membrane prolipoproteins. Hydrolyzes -Xaa-Yaa-Zaa-|-(S,diacylglyceryl)Cys-, in which Xaa is hydrophobic (preferably Leu), and Yaa (Ala or Ser) and Zaa (Gly or Ala) have small, neutral side chains.. The protein operates within protein modification; lipoprotein biosynthesis (signal peptide cleavage). In terms of biological role, this protein specifically catalyzes the removal of signal peptides from prolipoproteins. This Chlorobium phaeovibrioides (strain DSM 265 / 1930) (Prosthecochloris vibrioformis (strain DSM 265)) protein is Lipoprotein signal peptidase.